The primary structure comprises 179 residues: MTQKVGVLAIQGGYQKHADMFKSLGVEVKLVKFNNDFDSIDRLVIPGGESTTLLNLLNKHQIFDKLYNFCSSKPVFGTCAGSIILSKGEGYLNLLDLEVQRNAYGRQVDSFVADISFNDKNITGVFIRAPKFIVVGNQVDILSKYQNSPVLLRQANILVSSFHPELTQDPTVHEYFLAM.

48–50 (GES) contributes to the L-glutamine binding site. The active-site Nucleophile is Cys-79. L-glutamine-binding positions include Arg-101 and 127-128 (IR). Residues His-163 and Glu-165 each act as charge relay system in the active site.

The protein belongs to the glutaminase PdxT/SNO family. In the presence of PdxS, forms a dodecamer of heterodimers. Only shows activity in the heterodimer.

The enzyme catalyses aldehydo-D-ribose 5-phosphate + D-glyceraldehyde 3-phosphate + L-glutamine = pyridoxal 5'-phosphate + L-glutamate + phosphate + 3 H2O + H(+). It catalyses the reaction L-glutamine + H2O = L-glutamate + NH4(+). Its pathway is cofactor biosynthesis; pyridoxal 5'-phosphate biosynthesis. Its function is as follows. Catalyzes the hydrolysis of glutamine to glutamate and ammonia as part of the biosynthesis of pyridoxal 5'-phosphate. The resulting ammonia molecule is channeled to the active site of PdxS. The protein is Pyridoxal 5'-phosphate synthase subunit PdxT of Francisella tularensis subsp. holarctica (strain FTNF002-00 / FTA).